The primary structure comprises 670 residues: MIIQRLFGILYMLAGLAKAFPQFENVPAVLRQAAIANQGTWYAAASIWLGAHGDVINILVGVVLFGSGVILMLNPLWTTLVIYAQLLMMAVFVVILHQSQPQVMLLDGVFALAALYMLRGQYHRKPKPRTFPTTSFSLPTPSSESSFSAPLGDEYDVVIIGGGASGLTAASEFTHERVLVLEKSSTFGGNARYHTFNRLKHPTAGVCFQEPFPGSNMLRLLKKIGLEGKYKSNEKDTLVFFDTFLLLKCLGEIVVGFIKQPRYLLKLSVWGLTSQLFLHAIIGKPYVVAAKQLGDPIFADLYTFLDKFSPRGDFYPRLPWTPNGSWSKAHMELLDNISLYTYLFEPDKLGRLPEQLRPPARLGKLVENAVSTTLRVECLDIHDVSAYVGLHFLVGYLRGNLVTLPGGNGSISAGLCKYLSHQRNVTLQNHVQLTAVEPQHNGTCIQFTINGQPRQVQAQQIIWAAPKTQLATWLPGLPAKQLAAIKNIRHEDYYLANVFLSKPVLGHSFGGYMIEPDSNKDPFSWCKAGTCLVANWMDDHADVDVGVLTLLKPTTRSERQDRTAQNAFLALQQQTYAEIAKVLRNIGIGAEVIEDIQIWYWPAGLVTSVVGQQAEGVFETARQSFENIHFANQDSVGVGNIESAILSGIDAANAVKAQLMDTENVVEVAG.

Residues 1-19 form the signal peptide; that stretch reads MIIQRLFGILYMLAGLAKA. A run of 4 helical transmembrane segments spans residues 53–73, 76–96, 98–118, and 238–258; these read GDVINILVGVVLFGSGVILML, LWTTLVIYAQLLMMAVFVVIL, QSQPQVMLLDGVFALAALYML, and LVFFDTFLLLKCLGEIVVGFI.

Belongs to the flavin monoamine oxidase family. It depends on FAD as a cofactor.

It is found in the membrane. It participates in antibiotic biosynthesis; prodigiosin biosynthesis. Functionally, involved in the biosynthesis of 2-methyl-3-n-amyl-pyrrole (MAP), one of the terminal products involved in the biosynthesis of the red antibiotic prodigiosin (Pig). Catalyzes the oxidation of dihydro form of MAP (H2MAP) to yield MAP. This Serratia sp. (strain ATCC 39006) (Prodigiosinella confusarubida) protein is Oxidoreductase PigB.